The primary structure comprises 461 residues: Transforming growth factor beta-1-induced transcript 1 protein (461 aa).

Position 1 is an N-acetylmethionine (methionine 1). The interval 1-86 is disordered; it reads MEDLDALLSD…PPFSSSSGVL (86 aa). The transcription activation stretch occupies residues 1-200; the sequence is MEDLDALLSD…GCPSPPGQTN (200 aa). The interaction with PTK2B/PYK2 stretch occupies residues 1–240; it reads MEDLDALLSD…CNKPIAGQVV (240 aa). The short motif at 3-15 is the LD motif 1 element; the sequence is DLDALLSDLETTT. The residue at position 33 (threonine 33) is a Phosphothreonine. Tyrosine 38 is modified (phosphotyrosine). The span at 41 to 52 shows a compositional bias: polar residues; sequence QPQTGSGESSGA. Tyrosine 60 is modified (phosphotyrosine; by FAK2 and FYN). Residue serine 68 is modified to Phosphoserine. The segment covering 69–83 has biased composition (low complexity); the sequence is PKSVAPVAPPFSSSS. Residues 83–136 form an interaction with PTK2/FAK1 region; the sequence is SGVLGNGLCELDRLLQELNATQFNITDEIMSQFPSSKMAEGEGKEDQSEDKSIT. Positions 92–104 match the LD motif 2 motif; sequence ELDRLLQELNATQ. The segment at 116–154 is disordered; it reads PSSKMAEGEGKEDQSEDKSITTVPSSTFPAPSKPSATSA. The segment covering 121–134 has biased composition (basic and acidic residues); the sequence is AEGEGKEDQSEDKS. The segment covering 135-154 has biased composition (polar residues); sequence ITTVPSSTFPAPSKPSATSA. Phosphoserine is present on residues serine 140, serine 141, serine 164, and serine 186. The short motif at 157-168 is the LD motif 3 element; the sequence is ELDRLMASLSDF. A disordered region spans residues 171–204; that stretch reads QNHLPASGPPQPPAVSPTREGCPSPPGQTNKGSL. Threonine 188 carries the post-translational modification Phosphothreonine. Serine 194 carries the post-translational modification Phosphoserine. Residues 203–215 carry the LD motif 4 motif; the sequence is SLDTMLGLLQSDL. 4 consecutive LIM zinc-binding domains span residues 226–285, 286–343, 344–403, and 404–461; these read GLCG…RFSP, RCGF…QLFA, PRCQ…QRGS, and LCAT…KLFG. Residue serine 403 is modified to Phosphoserine. Threonine 407 is modified (phosphothreonine).

Belongs to the paxillin family. As to quaternary structure, homooligomer. Interacts with PPARG. Interacts with TRAF4. Interacts with CRIP2. Interacts with HSPB1. Interacts with ILK. Interacts with LIMS1 and LIMS2. Interacts with NCK2. Interacts with NUDT16L1. Interacts with PAK. Interacts with PTPN12. Interacts with TCF3. Interacts with TCF7L2. Interacts with VCL. Interacts (via LD motif 3) with GIT1. Also interacts with GIT2. Forms a complex with ARHGEF7. Interacts with AR/androgen receptor in a ligand-dependent manner. Interacts with CSK. Interacts with PTK2/FAK1 and PTK2B/PYK2. Interacts with SLC6A3 and SLC6A4. Interacts with NR3C1. Interacts with SMAD3. Interacts with MAPK15. Interacts with SRC. Interacts with LYN. Interacts with talin. Interacts (via LIM zinc-binding domain 2) with CBLC (via RING-type zinc finger); the interaction is direct and enhances CBLC E3 ubiquitin-protein ligase activity. Interacts with PARVA. Interacts with PXN. Post-translationally, phosphorylated by gonadotropin-releasing hormone-activated SRC. In terms of tissue distribution, strongly expressed in large intestine, lung, spleen, testis, uterus and to a lower extent in brain, kidney and liver (at protein level). In brain, expressed by neuronal and non neuronal cells (at protein level).

It is found in the cell junction. The protein localises to the focal adhesion. The protein resides in the nucleus matrix. Its subcellular location is the cytoplasm. It localises to the cytoskeleton. In terms of biological role, functions as a molecular adapter coordinating multiple protein-protein interactions at the focal adhesion complex and in the nucleus. Links various intracellular signaling modules to plasma membrane receptors and regulates the Wnt and TGFB signaling pathways. May also regulate SLC6A3 and SLC6A4 targeting to the plasma membrane hence regulating their activity. In the nucleus, functions as a nuclear receptor coactivator regulating glucocorticoid, androgen, mineralocorticoid and progesterone receptor transcriptional activity. May play a role in the processes of cell growth, proliferation, migration, differentiation and senescence. May have a zinc-dependent DNA-binding activity. The chain is Transforming growth factor beta-1-induced transcript 1 protein (Tgfb1i1) from Rattus norvegicus (Rat).